A 1019-amino-acid chain; its full sequence is Probable ubiquitination network signaling protein acrB (1019 aa).

2 disordered regions span residues 1-94 (MPRS…PDHL) and 109-143 (NDGVASQTGGDVAGPASRRTEKSATGSKRSPSNAS). Positions 30 to 43 (QKSNGHLNVNLNGG) are enriched in polar residues. Residues 44–66 (SASSSLSSSQVDLPSSRSSSDPV) are compositionally biased toward low complexity. Polar residues-rich tracts occupy residues 68 to 83 (PTTTAASTKLNGTPDS) and 131 to 143 (SATGSKRSPSNAS). The next 3 membrane-spanning stretches (helical) occupy residues 163–183 (IAILIFLLQLPPMVLTLVQFL), 216–236 (LGTMIAMDGFCLLIWGLFMWT), and 259–279 (FGKNGGVNTLCVGIVLIMHLV). Disordered regions lie at residues 343 to 371 (ARRSMAKNRTPNPPRTGKRIDTEASAGSQ), 580 to 603 (DAEQVSSVSTPPHPSYRPSSPTTT), 831 to 855 (LDPGPLTPEGNLPGTNPFSESALPL), 879 to 905 (SPLQTASSPVGASSSHPTSPVQQPSYL), and 963 to 1019 (DKRS…GKTN). The span at 580 to 589 (DAEQVSSVST) shows a compositional bias: polar residues. Residues 602 to 788 (TTLKNSIVNA…REQDQAKLEA (187 aa)) adopt a coiled-coil conformation. Residues 992–1008 (RGSGSGSNGSGGSGSGS) show a composition bias toward gly residues.

Belongs to the acrB family.

Its subcellular location is the membrane. In terms of biological role, component of the regulatory network controlling carbon source utilization through ubiquitination and deubiquitination involving creA, creB, creC, creD and acrB. Involved in resistance to acriflavine, and required for normal growth on a range of sole carbon sources, including fructose, cellobiose, raffinose, and starch, and reduced utilization of amino acids, including GABA and beta-alanine, as sole carbon and nitrogen sources. The sequence is that of Probable ubiquitination network signaling protein acrB (acrB) from Aspergillus fumigatus (strain ATCC MYA-4609 / CBS 101355 / FGSC A1100 / Af293) (Neosartorya fumigata).